A 91-amino-acid chain; its full sequence is MARMVFCRKYKQQLEGLDFPPYPGAKGQDLFDNVSKKAWQEWMAHQTMLINEKRLNVMDMGTKVYLTEQMHKFLSGEGYDQADGYVPPSNQ.

The protein belongs to the Fe(2+)-trafficking protein family.

Its function is as follows. Could be a mediator in iron transactions between iron acquisition and iron-requiring processes, such as synthesis and/or repair of Fe-S clusters in biosynthetic enzymes. The polypeptide is Probable Fe(2+)-trafficking protein (Cellvibrio japonicus (strain Ueda107) (Pseudomonas fluorescens subsp. cellulosa)).